A 555-amino-acid polypeptide reads, in one-letter code: Glutamate--tRNA ligase (555 aa).

Residues 100–110 (PNPSGPLHIGH) carry the 'HIGH' region motif.

This sequence belongs to the class-I aminoacyl-tRNA synthetase family. Glutamate--tRNA ligase type 2 subfamily.

It localises to the cytoplasm. The enzyme catalyses tRNA(Glu) + L-glutamate + ATP = L-glutamyl-tRNA(Glu) + AMP + diphosphate. Functionally, catalyzes the attachment of glutamate to tRNA(Glu) in a two-step reaction: glutamate is first activated by ATP to form Glu-AMP and then transferred to the acceptor end of tRNA(Glu). The protein is Glutamate--tRNA ligase of Methanococcus maripaludis (strain DSM 14266 / JCM 13030 / NBRC 101832 / S2 / LL).